Consider the following 170-residue polypeptide: UPF0260 protein RPE_1881 (170 aa).

Belongs to the UPF0260 family.

This Rhodopseudomonas palustris (strain BisA53) protein is UPF0260 protein RPE_1881.